The following is a 250-amino-acid chain: 1-(5-phosphoribosyl)-5-[(5-phosphoribosylamino)methylideneamino] imidazole-4-carboxamide isomerase (250 aa).

Residue aspartate 8 is the Proton acceptor of the active site. The Proton donor role is filled by aspartate 131.

The protein belongs to the HisA/HisF family.

Its subcellular location is the cytoplasm. It carries out the reaction 1-(5-phospho-beta-D-ribosyl)-5-[(5-phospho-beta-D-ribosylamino)methylideneamino]imidazole-4-carboxamide = 5-[(5-phospho-1-deoxy-D-ribulos-1-ylimino)methylamino]-1-(5-phospho-beta-D-ribosyl)imidazole-4-carboxamide. The protein operates within amino-acid biosynthesis; L-histidine biosynthesis; L-histidine from 5-phospho-alpha-D-ribose 1-diphosphate: step 4/9. This is 1-(5-phosphoribosyl)-5-[(5-phosphoribosylamino)methylideneamino] imidazole-4-carboxamide isomerase from Paraburkholderia phytofirmans (strain DSM 17436 / LMG 22146 / PsJN) (Burkholderia phytofirmans).